Here is a 229-residue protein sequence, read N- to C-terminus: NAD-dependent protein deacylase (229 aa).

Residues 1–227 (MKNLVILSGA…QDLMPKLIEM (227 aa)) enclose the Deacetylase sirtuin-type domain. 9 to 28 (GAGISAESGIKTFRDADGLW) provides a ligand contact to NAD(+). Y53 and R56 together coordinate substrate. 86 to 89 (QNVD) contributes to the NAD(+) binding site. Catalysis depends on H104, which acts as the Proton acceptor. Residue 169-171 (GTS) participates in NAD(+) binding.

It belongs to the sirtuin family. Class III subfamily.

The protein localises to the cytoplasm. The enzyme catalyses N(6)-acetyl-L-lysyl-[protein] + NAD(+) + H2O = 2''-O-acetyl-ADP-D-ribose + nicotinamide + L-lysyl-[protein]. It carries out the reaction N(6)-succinyl-L-lysyl-[protein] + NAD(+) + H2O = 2''-O-succinyl-ADP-D-ribose + nicotinamide + L-lysyl-[protein]. NAD-dependent lysine deacetylase and desuccinylase that specifically removes acetyl and succinyl groups on target proteins. Modulates the activities of several proteins which are inactive in their acylated form. This is NAD-dependent protein deacylase from Helicobacter pylori (strain ATCC 700392 / 26695) (Campylobacter pylori).